The sequence spans 804 residues: E3 ubiquitin-protein ligase RNF10 (804 aa).

Low complexity-rich tracts occupy residues 1-31 (MPQSSPSAAATASDMDKNSGSNSSSASSGSS), 78-90 (SNQSRRSNSQKSK), and 104-113 (SKPFSSSSNG). The segment at 1–134 (MPQSSPSAAA…AEFSPAQFSG (134 aa)) is disordered. Phosphoserine is present on S5. The residue at position 110 (S110) is a Phosphoserine. The span at 114-124 (GRRDEVAEAQR) shows a compositional bias: basic and acidic residues. A Phosphoserine modification is found at S128. The RING-type zinc finger occupies 225–267 (CPICLYPPTAAKITRCGHIFCWACILHYLSLSEKTWSKCPICY). Disordered regions lie at residues 589–611 (DIEKRKRQRQKKAREERRRERRI), 646–665 (DSALGPTSTEGHGALSLSPL), and 715–804 (KADG…VHTK). Positions 601–611 (AREERRRERRI) are enriched in basic and acidic residues. Over residues 646 to 655 (DSALGPTSTE) the composition is skewed to polar residues. Over residues 715–729 (KADGWPKTAPKKDDN) the composition is skewed to basic and acidic residues. Over residues 795 to 804 (LFSTSVVHTK) the composition is skewed to polar residues.

Belongs to the RNF10 family. Interacts with MEOX2.

It localises to the cytoplasm. It is found in the nucleus. It catalyses the reaction S-ubiquitinyl-[E2 ubiquitin-conjugating enzyme]-L-cysteine + [acceptor protein]-L-lysine = [E2 ubiquitin-conjugating enzyme]-L-cysteine + N(6)-ubiquitinyl-[acceptor protein]-L-lysine.. It participates in protein modification; protein ubiquitination. Functionally, E3 ubiquitin-protein ligase that catalyzes monoubiquitination of 40S ribosomal proteins RPS2/us5 and RPS3/us3 in response to ribosome stalling. Part of a ribosome quality control that takes place when ribosomes have stalled during translation initiation (iRQC): RNF10 acts by mediating monoubiquitination of RPS2/us5 and RPS3/us3, promoting their degradation by the proteasome. Also promotes ubiquitination of 40S ribosomal proteins in response to ribosome stalling during translation elongation. The action of RNF10 in iRQC is counteracted by USP10. May also act as a transcriptional factor involved in the regulation of MAG (Myelin-associated glycoprotein) expression. Acts as a regulator of Schwann cell differentiation and myelination. This chain is E3 ubiquitin-protein ligase RNF10, found in Mus musculus (Mouse).